A 2465-amino-acid chain; its full sequence is Highly reducing polyketide synthase milA (2465 aa).

Residues 1–434 (MEPIAIVGSA…GANCHVILEG (434 aa)) enclose the Ketosynthase family 3 (KS3) domain. Residues Cys-172, His-311, and His-355 each act as for beta-ketoacyl synthase activity in the active site. Residues 450 to 476 (KPSLSSSPSLSPTSTSPPTPRTPANSL) are disordered. Over residues 451–463 (PSLSSSPSLSPTS) the composition is skewed to low complexity. The tract at residues 567–888 (VFTGQGAQWA…CGTLSRAVDD (322 aa)) is malonyl-CoA:ACP transacylase (MAT) domain. The segment at 957 to 1096 (HPLLGVRTNT…GKVQLFVGGD (140 aa)) is N-terminal hotdog fold. The dehydratase (DH) domain stretch occupies residues 957-1265 (HPLLGVRTNT…LTVSPVAPVT (309 aa)). In terms of domain architecture, PKS/mFAS DH spans 957–1267 (HPLLGVRTNT…VSPVAPVTAD (311 aa)). The active-site Proton acceptor; for dehydratase activity is His-989. The segment at 1111 to 1267 (LNEIDVDTFY…VSPVAPVTAD (157 aa)) is C-terminal hotdog fold. Residue Asp-1174 is the Proton donor; for dehydratase activity of the active site. Positions 1334-1367 (HSTNGLTNGHASTNGHGSTNGHISTNGHSTNGDV) are disordered. The segment at 2095–2269 (TYFLVGMAGS…AASVINLTGV (175 aa)) is ketoreductase (KR)domain. Residues 2384-2459 (DMIFRAFQTV…QVVWSVVHQI (76 aa)) form the Carrier domain. Residue Ser-2419 is modified to O-(pantetheine 4'-phosphoryl)serine.

Requires pantetheine 4'-phosphate as cofactor.

It carries out the reaction 10 malonyl-CoA + acetyl-CoA + 3 AH2 + 8 NADPH + 18 H(+) = cordypyrone A + 3 A + 10 CO2 + 8 NADP(+) + 11 CoA + 8 H2O. The protein operates within secondary metabolite biosynthesis. In terms of biological role, highly reducing polyketide synthase (HR-PKS); part of the gene cluster that mediates the biosynthesis of cordypyrones A and B, 2 pyrones that show modest activities against pathogenic bacteria including methicillin-resistant Staphylococcus aureus (MRSA), Mycobacterium tuberculosis and Bacillus cereus. The HR-PKS milA catalyzes the formation of cordypyrones A via condensation of one acetate with 10 malonate units. Since milA lacks an enoyl reductase domain, the 2 beta-keto processing domains DH and KR of milA collaborate with the trans-enoyl reductase milB to catalyze the different levels of reduction. The cytochrome P450 monooxygenase milC then hydroxylates the C-22 of cordypyrones A to yield cordypyrones B. The polypeptide is Highly reducing polyketide synthase milA (Cordyceps militaris (strain CM01) (Caterpillar fungus)).